The following is a 254-amino-acid chain: Putative hydro-lyase SACE_1553 (254 aa).

This sequence belongs to the D-glutamate cyclase family.

This chain is Putative hydro-lyase SACE_1553, found in Saccharopolyspora erythraea (strain ATCC 11635 / DSM 40517 / JCM 4748 / NBRC 13426 / NCIMB 8594 / NRRL 2338).